Reading from the N-terminus, the 222-residue chain is uncharacterized protein (222 aa).

The N-myristoyl glycine; by host moiety is linked to residue glycine 2.

This sequence belongs to the mimivirus R683/R861 family.

This is an uncharacterized protein from Acanthamoeba polyphaga mimivirus (APMV).